An 860-amino-acid polypeptide reads, in one-letter code: Alpha,alpha-trehalose-phosphate synthase [UDP-forming] 6 (860 aa).

Ser5 is subject to Phosphoserine. The tract at residues Asp53 to Arg557 is glycosyltransferase.

The protein in the N-terminal section; belongs to the glycosyltransferase 20 family. It in the C-terminal section; belongs to the trehalose phosphatase family. Binds to the phosphopeptide-binding site of GRF/14-3-3. In terms of processing, phosphorylated. As to expression, expressed in seedlings, leaves, stems, flowers, siliques and roots.

The enzyme catalyses D-glucose 6-phosphate + UDP-alpha-D-glucose = alpha,alpha-trehalose 6-phosphate + UDP + H(+). Functionally, regulates plant architecture, shape of epidermal pavement cells and branching of trichomes. The polypeptide is Alpha,alpha-trehalose-phosphate synthase [UDP-forming] 6 (Arabidopsis thaliana (Mouse-ear cress)).